Consider the following 339-residue polypeptide: Ribosomal RNA small subunit methyltransferase C (339 aa).

This sequence belongs to the methyltransferase superfamily. RsmC family. As to quaternary structure, monomer.

It is found in the cytoplasm. The catalysed reaction is guanosine(1207) in 16S rRNA + S-adenosyl-L-methionine = N(2)-methylguanosine(1207) in 16S rRNA + S-adenosyl-L-homocysteine + H(+). Functionally, specifically methylates the guanine in position 1207 of 16S rRNA in the 30S particle. In Aliivibrio fischeri (strain MJ11) (Vibrio fischeri), this protein is Ribosomal RNA small subunit methyltransferase C.